The following is a 506-amino-acid chain: Ent-kaurenoic acid oxidase (506 aa).

A helical transmembrane segment spans residues A11–V31. C451 lines the heme pocket.

This sequence belongs to the cytochrome P450 family. Heme is required as a cofactor. As to expression, expressed in roots and panicles. Expressed at low levels in vegetative shoot apices, leaf sheaths, leaf blades and stems.

The protein localises to the endoplasmic reticulum membrane. The enzyme catalyses ent-kaur-16-en-19-oate + 3 reduced [NADPH--hemoprotein reductase] + 3 O2 = gibberellin A12 + 3 oxidized [NADPH--hemoprotein reductase] + 4 H2O + 4 H(+). It catalyses the reaction ent-kaur-16-en-19-oate + reduced [NADPH--hemoprotein reductase] + O2 = ent-7alpha-hydroxykaur-16-en-19-oate + oxidized [NADPH--hemoprotein reductase] + H2O + H(+). It carries out the reaction ent-7alpha-hydroxykaur-16-en-19-oate + reduced [NADPH--hemoprotein reductase] + O2 = gibberellin A12 aldehyde + oxidized [NADPH--hemoprotein reductase] + 2 H2O + H(+). The catalysed reaction is gibberellin A12 aldehyde + reduced [NADPH--hemoprotein reductase] + O2 = gibberellin A12 + oxidized [NADPH--hemoprotein reductase] + H2O + 2 H(+). The protein operates within plant hormone biosynthesis; gibberellin biosynthesis. Its function is as follows. Involved in gibberellin (GA) biosynthesis. Catalyzes three successive oxidations of ent-kaurenoic acid giving gibberellin 12 (GA12), a key step in GAs biosynthesis. GAs, which are involved many processes, including stem elongation, play a central role in plant development. Required for pollen germination and elongation. This Oryza sativa subsp. japonica (Rice) protein is Ent-kaurenoic acid oxidase.